The following is a 177-amino-acid chain: Hypoxanthine phosphoribosyltransferase (177 aa).

The diphosphate site is built by R43 and G44. Residue E99 participates in GMP binding. E99 lines the IMP pocket. Mg(2+)-binding residues include E99 and D100. Catalysis depends on D103, which acts as the Proton acceptor. GMP-binding positions include 103–108, K131, and D159; that span reads DSGKTL. Residues 103 to 108 and K131 contribute to the IMP site; that span reads DSGKTL. R165 is a binding site for diphosphate.

This sequence belongs to the purine/pyrimidine phosphoribosyltransferase family. In terms of assembly, homotetramer. Mg(2+) serves as cofactor.

The protein localises to the cytoplasm. It carries out the reaction IMP + diphosphate = hypoxanthine + 5-phospho-alpha-D-ribose 1-diphosphate. It catalyses the reaction GMP + diphosphate = guanine + 5-phospho-alpha-D-ribose 1-diphosphate. It participates in purine metabolism; IMP biosynthesis via salvage pathway; IMP from hypoxanthine: step 1/1. Functionally, purine salvage pathway enzyme which catalyzes the transfer of the ribosyl-5-phosphate group from 5-phospho-alpha-D-ribose 1-diphosphate (PRPP) to the N9 position of hypoxanthine to yield IMP (inosine 5'-monophosphate). To a lesser extent, can also act on guanine leading to GMP, but shows a highly less efficient activity with xanthine. In Buchnera aphidicola subsp. Schizaphis graminum (strain Sg), this protein is Hypoxanthine phosphoribosyltransferase (hpt).